Here is a 767-residue protein sequence, read N- to C-terminus: Photosystem I P700 chlorophyll a apoprotein A1 (767 aa).

The tract at residues 1–22 is disordered; that stretch reads MTISPPESGEKDKKILESPVKA. Basic and acidic residues predominate over residues 8–22; sequence SGEKDKKILESPVKA. The next 8 helical transmembrane spans lie at 76–99, 162–185, 201–225, 309–327, 368–391, 407–433, 455–477, and 558–576; these read IFSA…FHGA, LMAL…FHYH, LNHH…HIGA, VSHH…GHMY, RHAQ…HHMY, LGLF…IAMV, ALIS…LYIH, and LMIH…LILL. Residues C600 and C609 each contribute to the [4Fe-4S] cluster site. A run of 2 helical transmembrane segments spans residues 616-637 and 681-703; these read HVFL…HFSW and ISMY…MFLF. Residue H692 coordinates divinylchlorophyll a'. Residues M700 and Y708 each contribute to the divinyl chlorophyll a site. W709 contacts phylloquinone. The helical transmembrane segment at 741-761 threads the bilayer; the sequence is AVGVTHFLVGGIATTWAFFHA.

It belongs to the PsaA/PsaB family. The PsaA/B heterodimer binds the P700 divinyl chlorophyll special pair and subsequent electron acceptors. PSI consists of a core antenna complex that captures photons, and an electron transfer chain that converts photonic excitation into a charge separation. The cyanobacterial PSI reaction center is composed of one copy each of PsaA,B,C,D,E,F,I,J,K,L,M and X, and forms trimeric complexes. The cofactor is PSI electron transfer chain: 5 divinyl chlorophyll a, 1 divinyl chlorophyll a', 2 phylloquinones and 3 4Fe-4S clusters. PSI core antenna: 90 divinyl chlorophyll a, 22 carotenoids, 3 phospholipids and 1 galactolipid. P700 is a divinyl chlorophyll a/divinyl chlorophyll a' dimer, A0 is one or more divinyl chlorophyll a, A1 is one or both phylloquinones and FX is a shared 4Fe-4S iron-sulfur center..

The protein resides in the cellular thylakoid membrane. It catalyses the reaction reduced [plastocyanin] + hnu + oxidized [2Fe-2S]-[ferredoxin] = oxidized [plastocyanin] + reduced [2Fe-2S]-[ferredoxin]. PsaA and PsaB bind P700, the primary electron donor of photosystem I (PSI), as well as the electron acceptors A0, A1 and FX. PSI is a plastocyanin/cytochrome c6-ferredoxin oxidoreductase, converting photonic excitation into a charge separation, which transfers an electron from the donor P700 chlorophyll pair to the spectroscopically characterized acceptors A0, A1, FX, FA and FB in turn. Oxidized P700 is reduced on the lumenal side of the thylakoid membrane by plastocyanin or cytochrome c6. The chain is Photosystem I P700 chlorophyll a apoprotein A1 from Prochlorococcus marinus subsp. pastoris (strain CCMP1986 / NIES-2087 / MED4).